The sequence spans 148 residues: Deoxyuridine 5'-triphosphate nucleotidohydrolase (148 aa).

7 residues coordinate dUMP: S69, G82, D85, Y88, R137, F142, and G143.

The protein belongs to the dUTPase family. As to quaternary structure, homotrimer. It depends on Mg(2+) as a cofactor.

The catalysed reaction is dUTP + H2O = dUMP + diphosphate + H(+). It participates in pyrimidine metabolism; dUMP biosynthesis; dUMP from dCTP (dUTP route): step 2/2. In terms of biological role, involved in nucleotide metabolism via production of dUMP, the immediate precursor of thymidine nucleotides, and decreases the intracellular concentration of dUTP so that uracil cannot be incorporated into DNA. In Kluyveromyces lactis (strain ATCC 8585 / CBS 2359 / DSM 70799 / NBRC 1267 / NRRL Y-1140 / WM37) (Yeast), this protein is Deoxyuridine 5'-triphosphate nucleotidohydrolase (DUT1).